Here is a 266-residue protein sequence, read N- to C-terminus: Phosphatidylglycerol--prolipoprotein diacylglyceryl transferase (266 aa).

7 consecutive transmembrane segments (helical) span residues Leu17–Ala37, Leu56–Tyr76, Trp92–Phe112, Phe120–Ile140, Pro171–Phe191, Ala199–Val219, and Trp233–Val253. Arg139 serves as a coordination point for a 1,2-diacyl-sn-glycero-3-phospho-(1'-sn-glycerol).

The protein belongs to the Lgt family.

Its subcellular location is the cell inner membrane. It carries out the reaction L-cysteinyl-[prolipoprotein] + a 1,2-diacyl-sn-glycero-3-phospho-(1'-sn-glycerol) = an S-1,2-diacyl-sn-glyceryl-L-cysteinyl-[prolipoprotein] + sn-glycerol 1-phosphate + H(+). It functions in the pathway protein modification; lipoprotein biosynthesis (diacylglyceryl transfer). Its function is as follows. Catalyzes the transfer of the diacylglyceryl group from phosphatidylglycerol to the sulfhydryl group of the N-terminal cysteine of a prolipoprotein, the first step in the formation of mature lipoproteins. The chain is Phosphatidylglycerol--prolipoprotein diacylglyceryl transferase from Pseudomonas aeruginosa (strain UCBPP-PA14).